We begin with the raw amino-acid sequence, 187 residues long: Large ribosomal subunit protein uL13 (187 aa).

The protein belongs to the universal ribosomal protein uL13 family. As to quaternary structure, part of the 50S ribosomal subunit.

Its function is as follows. This protein is one of the early assembly proteins of the 50S ribosomal subunit, although it is not seen to bind rRNA by itself. It is important during the early stages of 50S assembly. The protein is Large ribosomal subunit protein uL13 of Pyrobaculum aerophilum (strain ATCC 51768 / DSM 7523 / JCM 9630 / CIP 104966 / NBRC 100827 / IM2).